The chain runs to 506 residues: Histidine ammonia-lyase (506 aa).

Residues 143–145 (ASG) constitute a cross-link (5-imidazolinone (Ala-Gly)). Position 144 is a 2,3-didehydroalanine (Ser) (Ser-144).

Belongs to the PAL/histidase family. Post-translationally, contains an active site 4-methylidene-imidazol-5-one (MIO), which is formed autocatalytically by cyclization and dehydration of residues Ala-Ser-Gly.

Its subcellular location is the cytoplasm. The catalysed reaction is L-histidine = trans-urocanate + NH4(+). It participates in amino-acid degradation; L-histidine degradation into L-glutamate; N-formimidoyl-L-glutamate from L-histidine: step 1/3. This Salmonella typhi protein is Histidine ammonia-lyase.